The following is a 482-amino-acid chain: Ubiquitin carboxyl-terminal hydrolase MINDY-1 (482 aa).

The tract at residues 1–119 (MEQPQAECPA…RPQQLPQSPR (119 aa)) is disordered. Positions 21–66 (ESEKHEALSGPEKHPQDKDGADAAPEKHPQDKDGADAHGEAGKQKS) are enriched in basic and acidic residues. A compositionally biased stretch (pro residues) spans 82–94 (CPPPEASSSPPGP). A compositionally biased stretch (polar residues) spans 106–119 (EACSRPQQLPQSPR). At S117 the chain carries Phosphoserine. The active-site Nucleophile is C151. The Proton acceptor role is filled by H333. A ubiquitin-binding domain (UBD) region spans residues 402 to 441 (QVDQDYLIALSLQQQQQPQGMLGLSDLELAQQLQQEEYQQ). Over residues 437-446 (EEYQQQQAVQ) the composition is skewed to low complexity. The tract at residues 437 to 482 (EEYQQQQAVQPVRTRAPSSPGRGATSGRPAGERRQRSKTESDCVLL) is disordered. A Phosphoserine modification is found at S454. Residues 466 to 482 (AGERRQRSKTESDCVLL) show a composition bias toward basic and acidic residues.

The protein belongs to the MINDY deubiquitinase family. FAM63 subfamily.

The enzyme catalyses Thiol-dependent hydrolysis of ester, thioester, amide, peptide and isopeptide bonds formed by the C-terminal Gly of ubiquitin (a 76-residue protein attached to proteins as an intracellular targeting signal).. In terms of biological role, hydrolase that can specifically remove 'Lys-48'-linked conjugated ubiquitin from proteins. Has exodeubiquitinase activity and has a preference for long polyubiquitin chains. May play a regulatory role at the level of protein turnover. The protein is Ubiquitin carboxyl-terminal hydrolase MINDY-1 (Mindy1) of Rattus norvegicus (Rat).